The primary structure comprises 214 residues: RNA-binding protein 38 (214 aa).

The region spanning 11–88 (TKIFVGGLPY…RKANVNLAYL (78 aa)) is the RRM domain.

The protein belongs to the RBM38 family. Strongly expressed in the nervous system. Expressed at early neurula stages of development.

It is found in the cytoplasm. It localises to the cytosol. The protein resides in the nucleus. In terms of biological role, RNA-binding protein that specifically bind the 3'-UTR of VegT transcripts, leading to maintain their stability and stimulate their translation, thereby playing a role in germ layer formation. VegT is a localized maternal determinant essentially required for endoderm formation. Also has some proneural function in the open neural plate and in the context of retinogenesis. May also act as a mRNA splicing factor. May play a role in myogenic differentiation. In Xenopus laevis (African clawed frog), this protein is RNA-binding protein 38 (rbm38).